The sequence spans 168 residues: Cytochrome c-type biogenesis protein CcmE (168 aa).

At 1–7 (MTRKKRR) the chain is on the cytoplasmic side. A helical; Signal-anchor for type II membrane protein membrane pass occupies residues 8–28 (LYMLGLALLGLGTATALTLSA). Residues 29–168 (FEENIVFFYS…KVHATTTLKP (140 aa)) lie on the Periplasmic side of the membrane. Positions 122 and 126 each coordinate heme. The disordered stretch occupies residues 149–168 (SIYTPADSDDKVHATTTLKP).

This sequence belongs to the CcmE/CycJ family.

It is found in the cell inner membrane. Its function is as follows. Heme chaperone required for the biogenesis of c-type cytochromes. Transiently binds heme delivered by CcmC and transfers the heme to apo-cytochromes in a process facilitated by CcmF and CcmH. The protein is Cytochrome c-type biogenesis protein CcmE of Rhodospirillum centenum (strain ATCC 51521 / SW).